Consider the following 453-residue polypeptide: Homogentisate 1,2-dioxygenase (453 aa).

Residues Met1–Gln42 form a disordered region. The active-site Proton acceptor is the His306. Fe cation is bound by residues His349 and Glu355. Positions 364 and 385 each coordinate homogentisate. His385 contacts Fe cation.

Belongs to the homogentisate dioxygenase family. Hexamer; dimer of trimers. Fe cation serves as cofactor.

The catalysed reaction is homogentisate + O2 = 4-maleylacetoacetate + H(+). The protein operates within amino-acid degradation; L-phenylalanine degradation; acetoacetate and fumarate from L-phenylalanine: step 4/6. Functionally, involved in the catabolism of homogentisate (2,5-dihydroxyphenylacetate or 2,5-OH-PhAc), a central intermediate in the degradation of phenylalanine and tyrosine. Catalyzes the oxidative ring cleavage of the aromatic ring of homogentisate to yield maleylacetoacetate. This chain is Homogentisate 1,2-dioxygenase, found in Rhizobium meliloti (strain 1021) (Ensifer meliloti).